The primary structure comprises 392 residues: Probable nucleoredoxin 3 (392 aa).

Thioredoxin domains lie at L17–R171 and E177–A326.

It belongs to the nucleoredoxin family.

The catalysed reaction is [protein]-dithiol + NAD(+) = [protein]-disulfide + NADH + H(+). The enzyme catalyses [protein]-dithiol + NADP(+) = [protein]-disulfide + NADPH + H(+). Its function is as follows. Probable thiol-disulfide oxidoreductase that may participate in various redox reactions. This Arabidopsis thaliana (Mouse-ear cress) protein is Probable nucleoredoxin 3.